The chain runs to 1171 residues: MRGARKSMGRVSYLRLPHLSGDQLCFVAEDDLWLASLDGPGRAWRLTVDRTKAGPPRFSPDGRHIAYTSWRTLVPEVHLVPVDGGPGRQLTHWGGLDTRVCGWSPPDPDGTTAVLAVASHGEPFSHLTWAYKVTPDGDPGRKLPWGPVTDIQAADLDGERRTLLLTGTPPHEPAAWKRYRGGATGRLWLHGERLLPDLGGHLSAPMFVGGRIAFLSDHEGVGNLYSCAQDGTGLRRHTDHDAFYARNAASDGTRVVYQCAGDLWIVDDLAPGSAPRRLDVRLSGPRAGRRTHQVPAAQHVGGISVDETGRASAVVVRGSLYWLTHRDGPARTIADTPGVRVRLPEMLGESGRIAYVTDAEGEDAVEISYLPRATGGRAARRLASGRLGRVLELVSDPAGDRLAVASHDGRLLILDVAEPDTEVTLALEAVDAGYPPDAGDEDAAGTAARADSAPDAPAEDTDARDIAAGTGTGDIADADAAAGGTVTPGSPGTPATAGGQVTELIRSVNGPVRDLAFSPDGTWLTWSHPGIGRTLRQIKMARIDGPEGTLVVDVTNGRFEDENPVFTRDGRYLAFLSWRGFDPVYDVHTGDLSFPLGCRPYLVPLSSATPSPFALNPEGRPAAGGLDPLEDEPGEGGAVMVEVEGLESRVTPFPVTASKYSALEPVAGGGLVWLRWPISGALGETFANPADPSERPTLEHFNLAKAKKSELVDHLDWFRVSGDGSRLVVLDEGELRAVPASEVGDGDSTTWIDLRRILHEVDPAAEWRQAYDEAGRLIRAYFWDPGMCGIDWDAVLDQYRPLLERVASPDEFADLLREVLGELGTSHAYVVAARRNEGPAHYQRWQGLLGANLACRDGRWLVRRILPGDSSDSKARSPLAGTGIRDGAVLTHVDGRPVDPVLGPSPLLAGAGGTTVELTFAPAEGCQGPSRRVAVVPLVDERPLRYQDWVAKRREVVRELSGGRCGYLHIPDMGGSGWAQFNRDLRMEVSRPALIVDVRGNAGGHISELVIEKLTRTILGWDLTRDAQPVSYTSNAPRGPVVAVADEATSSDGDMITAAFKLLRLGPVVGQRTWGGVVGMTGRHRLGDGSVITVPMNAAWFDAYGWSVENYGVAPDVEALRTPLDWAEGRYPVLDEAVRLALELLETNPPATPPGYEAVPDRSRPPLPPRE.

The segment at 432-498 (AGYPPDAGDE…GSPGTPATAG (67 aa)) is disordered. Composition is skewed to low complexity over residues 444–456 (AGTAARADSAPDA) and 466–498 (IAAGTGTGDIADADAAAGGTVTPGSPGTPATAG). Residue histidine 827 is the Charge relay system of the active site. Positions 842–941 (YQRWQGLLGA…RVAVVPLVDE (100 aa)) are PDZ-like. A substrate-binding site is contributed by 1002–1004 (AGG). Serine 1051 functions as the Nucleophile in the catalytic mechanism. 1079–1081 (GMT) contacts substrate. The Charge relay system role is filled by glutamate 1109. The segment at 1149–1171 (PPATPPGYEAVPDRSRPPLPPRE) is disordered. Positions 1159–1171 (VPDRSRPPLPPRE) are enriched in basic and acidic residues.

It belongs to the peptidase S41B family.

Its subcellular location is the cytoplasm. Degrades oligopeptides in a sequential manner. The protein is Putative tricorn protease homolog 2 (tri2) of Streptomyces coelicolor (strain ATCC BAA-471 / A3(2) / M145).